A 1006-amino-acid polypeptide reads, in one-letter code: SAC3 family protein A (1006 aa).

Disordered stretches follow at residues 1 to 75 (MNHG…GPAT), 106 to 162 (TPYQ…PGSY), 183 to 239 (GYQS…TIAT), 266 to 326 (GTEK…AVST), 516 to 550 (TVTT…RWEP), 595 to 638 (GFKP…SDKD), and 650 to 690 (AGSA…GNLH). Composition is skewed to polar residues over residues 26 to 75 (GSQT…GPAT) and 106 to 115 (TPYQTSSDPH). A compositionally biased stretch (low complexity) spans 116-140 (NYSNTGYSNYYSGYQQQPSQSYPQP). Residues 144-162 (YQNTGAPQPLSSFQNPGSY) show a composition bias toward polar residues. 2 stretches are compositionally biased toward polar residues: residues 269 to 282 (KLST…SQSF) and 313 to 326 (SHPP…AVST). Low complexity predominate over residues 516–539 (TVTTTNVTNSESSSAQLSSLQNKS). Basic residues predominate over residues 609-618 (SFQRPVKRQR). Positions 653 to 680 (AEEKKRRDSRSKRFEKIQGHSRGNDLTK) are enriched in basic and acidic residues. A PCI domain is found at 804 to 978 (DLPEYNQCLS…DMLLDTKATS (175 aa)).

It belongs to the SAC3 family. As to quaternary structure, interacts with EER5, SAC3B and CML20.

The protein localises to the nucleus. Component of the TREX-2 complex (transcription and export complex 2), a muliprotein complex that functions in docking export-competent ribonucleoprotein particles (mRNPs) to the nuclear entrance of the nuclear pore complex (nuclear basket). TREX-2 participates in mRNA export and accurate chromatin positioning in the nucleus by tethering genes to the nuclear periphery. The chain is SAC3 family protein A from Arabidopsis thaliana (Mouse-ear cress).